A 542-amino-acid chain; its full sequence is Chaperonin GroEL 2 (542 aa).

ATP is bound by residues 30 to 33 (TLGP), Lys51, 87 to 91 (DGTTT), Gly415, and Asp496.

Belongs to the chaperonin (HSP60) family. In terms of assembly, forms a cylinder of 14 subunits composed of two heptameric rings stacked back-to-back. Interacts with the co-chaperonin GroES.

The protein localises to the cytoplasm. It catalyses the reaction ATP + H2O + a folded polypeptide = ADP + phosphate + an unfolded polypeptide.. Functionally, together with its co-chaperonin GroES, plays an essential role in assisting protein folding. The GroEL-GroES system forms a nano-cage that allows encapsulation of the non-native substrate proteins and provides a physical environment optimized to promote and accelerate protein folding. The polypeptide is Chaperonin GroEL 2 (Cereibacter sphaeroides (strain ATCC 17023 / DSM 158 / JCM 6121 / CCUG 31486 / LMG 2827 / NBRC 12203 / NCIMB 8253 / ATH 2.4.1.) (Rhodobacter sphaeroides)).